We begin with the raw amino-acid sequence, 459 residues long: Putrescine aminotransferase (459 aa).

Residues 150–151 (GT) and Gln274 contribute to the pyridoxal 5'-phosphate site. An N6-(pyridoxal phosphate)lysine modification is found at Lys300. Position 332 (Thr332) interacts with pyridoxal 5'-phosphate.

The protein belongs to the class-III pyridoxal-phosphate-dependent aminotransferase family. Putrescine aminotransferase subfamily. It depends on pyridoxal 5'-phosphate as a cofactor.

The catalysed reaction is an alkane-alpha,omega-diamine + 2-oxoglutarate = an omega-aminoaldehyde + L-glutamate. The enzyme catalyses putrescine + 2-oxoglutarate = 1-pyrroline + L-glutamate + H2O. It catalyses the reaction cadaverine + 2-oxoglutarate = 5-aminopentanal + L-glutamate. Its pathway is amine and polyamine degradation; putrescine degradation; 4-aminobutanal from putrescine (transaminase route): step 1/1. Its function is as follows. Catalyzes the aminotransferase reaction from putrescine to 2-oxoglutarate, leading to glutamate and 4-aminobutanal, which spontaneously cyclizes to form 1-pyrroline. This is the first step in one of two pathways for putrescine degradation, where putrescine is converted into 4-aminobutanoate (gamma-aminobutyrate or GABA) via 4-aminobutanal. Also functions as a cadaverine transaminase in a a L-lysine degradation pathway to succinate that proceeds via cadaverine, glutarate and L-2-hydroxyglutarate. This Escherichia coli (strain ATCC 8739 / DSM 1576 / NBRC 3972 / NCIMB 8545 / WDCM 00012 / Crooks) protein is Putrescine aminotransferase.